Consider the following 572-residue polypeptide: Methionine--tRNA ligase (572 aa).

The 'HIGH' region motif lies at 11–21 (PYINGIKHLGN). The Zn(2+) site is built by Cys143, Cys146, Cys156, and Cys159. The short motif at 346 to 350 (QFSTS) is the 'KMSKS' region element. Thr349 contributes to the ATP binding site.

It belongs to the class-I aminoacyl-tRNA synthetase family. MetG type 1 subfamily. As to quaternary structure, monomer. Requires Zn(2+) as cofactor.

The protein localises to the cytoplasm. It catalyses the reaction tRNA(Met) + L-methionine + ATP = L-methionyl-tRNA(Met) + AMP + diphosphate. Functionally, is required not only for elongation of protein synthesis but also for the initiation of all mRNA translation through initiator tRNA(fMet) aminoacylation. This chain is Methionine--tRNA ligase, found in Cereibacter sphaeroides (strain ATCC 17029 / ATH 2.4.9) (Rhodobacter sphaeroides).